The chain runs to 492 residues: Histone-lysine N-methyltransferase ASHH1 (492 aa).

Residues 36-87 (EDISICECKFDFGDPDSACGERCLNVITNTECTPGYCPCGVYCKNQKFQKCE) enclose the AWS domain. The SET domain occupies 84-206 (QKCEYAKTKL…PRTELAYDYN (123 aa)). In terms of domain architecture, Post-SET spans 213–229 (AKVRCLCGAVACSGFLG). Residues 259-340 (SAEDELTSEP…NSQEDSSPKT (82 aa)) form a disordered region. Residues 266-275 (SEPSKNGESN) are compositionally biased toward polar residues. The segment covering 277–290 (NEEKEKDISTENHL) has biased composition (basic and acidic residues). Residues 291-306 (ESTALNIQQQSDSTPT) are compositionally biased toward polar residues. Residues 317–326 (VKTETSEDMK) show a composition bias toward basic and acidic residues. The span at 328 to 339 (LSQNSQEDSSPK) shows a compositional bias: polar residues.

It belongs to the class V-like SAM-binding methyltransferase superfamily. Histone-lysine methyltransferase family. SET2 subfamily.

The protein localises to the nucleus. It is found in the chromosome. It localises to the centromere. It carries out the reaction L-lysyl(4)-[histone H3] + 3 S-adenosyl-L-methionine = N(6),N(6),N(6)-trimethyl-L-lysyl(4)-[histone H3] + 3 S-adenosyl-L-homocysteine + 3 H(+). Histone methyltransferase involved in regulation of flowering time. Required for the expression of the SOC1/AGL20 gene. Required for histone H3 trimethylation on 'Lys-4' (H3K4me3) at the SOC1 locus. Prevents trimethylation on 'Lys-27' (H3K27me3) at the same locus. The chain is Histone-lysine N-methyltransferase ASHH1 (ASHH1) from Arabidopsis thaliana (Mouse-ear cress).